The chain runs to 111 residues: Ribonuclease P protein component (111 aa).

It belongs to the RnpA family. As to quaternary structure, consists of a catalytic RNA component (M1 or rnpB) and a protein subunit.

It carries out the reaction Endonucleolytic cleavage of RNA, removing 5'-extranucleotides from tRNA precursor.. Functionally, RNaseP catalyzes the removal of the 5'-leader sequence from pre-tRNA to produce the mature 5'-terminus. It can also cleave other RNA substrates such as 4.5S RNA. The protein component plays an auxiliary but essential role in vivo by binding to the 5'-leader sequence and broadening the substrate specificity of the ribozyme. This Clostridium botulinum (strain Okra / Type B1) protein is Ribonuclease P protein component.